An 862-amino-acid polypeptide reads, in one-letter code: Protein argonaute-2 (862 aa).

The 120-residue stretch at 232–351 folds into the PAZ domain; sequence PVIEFMCEVL…LPLEVCNIVA (120 aa). 2 interaction with guide RNA regions span residues 314–319 and 527–569; these read YFKDRH and GKTP…LCLK. A Piwi domain is found at 520-821; the sequence is LVVVILPGKT…VAFRARYHLV (302 aa). The interval 590-593 is interaction with GW182 family members; it reads FQQP. A divalent metal cation is bound at residue aspartate 600. The interval 653-663 is interaction with GW182 family members; the sequence is LIQFYKSTRFK. Aspartate 672 is an a divalent metal cation binding site. Interaction with guide RNA stretches follow at residues 712 to 713, 756 to 764, and 793 to 815; these read KR, HAGIQGTSR, and YVRC…VAFR. Histidine 810 is an a divalent metal cation binding site. The tract at residues 825–847 is disordered; sequence HDSAEGSHTSGQSNGRDQQALAK. Residues 830 to 841 are compositionally biased toward polar residues; it reads GSHTSGQSNGRD.

Belongs to the argonaute family. Ago subfamily. In terms of assembly, component of the RISC loading complex (RLC), or micro-RNA (miRNA) loading complex (miRLC), which is composed of dicer1, ago2 and tarbp2. Note that the trimeric RLC/miRLC is also referred to as RISC. It depends on Mg(2+) as a cofactor. Mn(2+) serves as cofactor.

The protein localises to the cytoplasm. Its subcellular location is the P-body. It carries out the reaction Endonucleolytic cleavage to 5'-phosphomonoester.. In terms of biological role, required for RNA-mediated gene silencing (RNAi) by the RNA-induced silencing complex (RISC). The 'minimal RISC' appears to include ago2 bound to a short guide RNA such as a microRNA (miRNA) or short interfering RNA (siRNA). These guide RNAs direct RISC to complementary mRNAs that are targets for RISC-mediated gene silencing. The precise mechanism of gene silencing depends on the degree of complementarity between the miRNA or siRNA and its target. Binding of RISC to a perfectly complementary mRNA generally results in silencing due to endonucleolytic cleavage of the mRNA specifically by ago2. Binding of RISC to a partially complementary mRNA results in silencing through inhibition of translation, and this is independent of endonuclease activity. The inhibition of translational initiation leads to the accumulation of the affected mRNA in cytoplasmic processing bodies (P-bodies), where mRNA degradation may subsequently occur. The polypeptide is Protein argonaute-2 (ago2) (Xenopus laevis (African clawed frog)).